A 195-amino-acid polypeptide reads, in one-letter code: Holliday junction branch migration complex subunit RuvA (195 aa).

The domain I stretch occupies residues 1-64; the sequence is MIASIRGIIQ…EDALTLYGFS (64 aa). The segment at 65–142 is domain II; sequence DPAQRNLFEQ…DLRQLSGTTP (78 aa). Residues 143–151 are flexible linker; the sequence is GNVSTLDRE. The tract at residues 151-195 is domain III; that stretch reads ELTDILISLGYSATEAAAAIAALPGDAPPTLEERLRLALRYFGSA.

It belongs to the RuvA family. Homotetramer. Forms an RuvA(8)-RuvB(12)-Holliday junction (HJ) complex. HJ DNA is sandwiched between 2 RuvA tetramers; dsDNA enters through RuvA and exits via RuvB. An RuvB hexamer assembles on each DNA strand where it exits the tetramer. Each RuvB hexamer is contacted by two RuvA subunits (via domain III) on 2 adjacent RuvB subunits; this complex drives branch migration. In the full resolvosome a probable DNA-RuvA(4)-RuvB(12)-RuvC(2) complex forms which resolves the HJ.

Its subcellular location is the cytoplasm. Its function is as follows. The RuvA-RuvB-RuvC complex processes Holliday junction (HJ) DNA during genetic recombination and DNA repair, while the RuvA-RuvB complex plays an important role in the rescue of blocked DNA replication forks via replication fork reversal (RFR). RuvA specifically binds to HJ cruciform DNA, conferring on it an open structure. The RuvB hexamer acts as an ATP-dependent pump, pulling dsDNA into and through the RuvAB complex. HJ branch migration allows RuvC to scan DNA until it finds its consensus sequence, where it cleaves and resolves the cruciform DNA. This chain is Holliday junction branch migration complex subunit RuvA, found in Chloroflexus aurantiacus (strain ATCC 29364 / DSM 637 / Y-400-fl).